A 379-amino-acid polypeptide reads, in one-letter code: Homoserine O-succinyltransferase (379 aa).

In terms of domain architecture, AB hydrolase-1 spans Asn48 to Met357. The active-site Nucleophile is the Ser154. Arg224 contributes to the substrate binding site. Residues Asp319 and His352 contribute to the active site. A substrate-binding site is contributed by Asp353.

This sequence belongs to the AB hydrolase superfamily. MetX family. Homodimer.

The protein localises to the cytoplasm. It catalyses the reaction L-homoserine + succinyl-CoA = O-succinyl-L-homoserine + CoA. Its pathway is amino-acid biosynthesis; L-methionine biosynthesis via de novo pathway; O-succinyl-L-homoserine from L-homoserine: step 1/1. With respect to regulation, activity increases in the presence of MetW. In terms of biological role, transfers a succinyl group from succinyl-CoA to L-homoserine, forming succinyl-L-homoserine. The protein is Homoserine O-succinyltransferase of Neisseria gonorrhoeae.